A 428-amino-acid chain; its full sequence is Enolase (428 aa).

(2R)-2-phosphoglycerate is bound at residue Gln-163. Glu-205 acts as the Proton donor in catalysis. Mg(2+) is bound by residues Asp-242, Glu-285, and Asp-312. (2R)-2-phosphoglycerate-binding residues include Lys-337, Arg-366, Ser-367, and Lys-388. Residue Lys-337 is the Proton acceptor of the active site.

It belongs to the enolase family. It depends on Mg(2+) as a cofactor.

It is found in the cytoplasm. Its subcellular location is the secreted. The protein resides in the cell surface. It catalyses the reaction (2R)-2-phosphoglycerate = phosphoenolpyruvate + H2O. It functions in the pathway carbohydrate degradation; glycolysis; pyruvate from D-glyceraldehyde 3-phosphate: step 4/5. Catalyzes the reversible conversion of 2-phosphoglycerate (2-PG) into phosphoenolpyruvate (PEP). It is essential for the degradation of carbohydrates via glycolysis. The sequence is that of Enolase from Erythrobacter litoralis (strain HTCC2594).